Reading from the N-terminus, the 453-residue chain is GTPase Der (453 aa).

2 EngA-type G domains span residues 3 to 167 and 187 to 360; these read PIIV…ISEK and IKVA…EDSK. GTP contacts are provided by residues 9–16, 57–61, 119–122, 193–200, 240–244, and 305–308; these read GRTNVGKS, DTAGL, NKID, GRPNVGKS, DTAGA, and NKCD. Residues 361–445 enclose the KH-like domain; sequence RKISTSTLIK…PIQIQFKDNE (85 aa).

Belongs to the TRAFAC class TrmE-Era-EngA-EngB-Septin-like GTPase superfamily. EngA (Der) GTPase family. As to quaternary structure, associates with the 50S ribosomal subunit.

GTPase that plays an essential role in the late steps of ribosome biogenesis. The polypeptide is GTPase Der (Buchnera aphidicola subsp. Acyrthosiphon pisum (strain 5A)).